A 294-amino-acid polypeptide reads, in one-letter code: Probable 2-(5''-triphosphoribosyl)-3'-dephosphocoenzyme-A synthase (294 aa).

This sequence belongs to the CitG/MdcB family.

It carries out the reaction 3'-dephospho-CoA + ATP = 2'-(5''-triphospho-alpha-D-ribosyl)-3'-dephospho-CoA + adenine. The polypeptide is Probable 2-(5''-triphosphoribosyl)-3'-dephosphocoenzyme-A synthase (Streptococcus equi subsp. equi (strain 4047)).